A 298-amino-acid polypeptide reads, in one-letter code: 4-hydroxy-tetrahydrodipicolinate synthase (298 aa).

T51 is a binding site for pyruvate. Y140 functions as the Proton donor/acceptor in the catalytic mechanism. K168 serves as the catalytic Schiff-base intermediate with substrate. A pyruvate-binding site is contributed by I210.

It belongs to the DapA family. As to quaternary structure, homotetramer; dimer of dimers.

It is found in the cytoplasm. The enzyme catalyses L-aspartate 4-semialdehyde + pyruvate = (2S,4S)-4-hydroxy-2,3,4,5-tetrahydrodipicolinate + H2O + H(+). It participates in amino-acid biosynthesis; L-lysine biosynthesis via DAP pathway; (S)-tetrahydrodipicolinate from L-aspartate: step 3/4. Catalyzes the condensation of (S)-aspartate-beta-semialdehyde [(S)-ASA] and pyruvate to 4-hydroxy-tetrahydrodipicolinate (HTPA). The chain is 4-hydroxy-tetrahydrodipicolinate synthase from Acidovorax sp. (strain JS42).